We begin with the raw amino-acid sequence, 93 residues long: Conotoxin Mr105 (93 aa).

The signal sequence occupies residues 1–22; sequence MQRGAVLLGVVALLVLWPQAGA. A propeptide spanning residues 23–33 is cleaved from the precursor; the sequence is ELYDVNDPDVR.

Belongs to the F superfamily. Post-translationally, contains 4 disulfide bonds. As to expression, expressed by the venom duct.

It localises to the secreted. This Conus marmoreus (Marble cone) protein is Conotoxin Mr105.